The following is a 282-amino-acid chain: Exo-glucosaminidase LytG (282 aa).

Residues 1-29 form the signal peptide; that stretch reads MARKKLKKRKLLISLFFLVSIPLALFVLA. Residues 203 to 281 form the GW domain; that stretch reads SLKSVDLNAS…DDSAVEIKEA (79 aa).

Belongs to the glycosyl hydrolase 73 family. The cofactor is Mg(2+).

It localises to the secreted. It is found in the cell wall. Its activity is regulated as follows. Inhibited by EDTA. In terms of biological role, is the major glucosaminidase responsible for peptidoglycan structural determination during vegetative growth. Catalyzes the hydrolysis of 1,4-beta-linkages between N-acetyl-D-glucosamine and N-acetylmuramic acid residues in peptidoglycan. Acts processively from the ends of the glycan strands. Also plays a role in motility, chemotaxis and cell division. This Bacillus subtilis (strain 168) protein is Exo-glucosaminidase LytG (lytG).